Consider the following 120-residue polypeptide: U13-lycotoxin-Ls1a (120 aa).

The N-terminal stretch at 1 to 16 (MKTLFVLISILYAVYC) is a signal peptide. Residues 17-54 (FSSEEDVDSAYLANELEPVEDINSEQYAALEPKEEQER) constitute a propeptide that is removed on maturation. Cystine bridges form between C56/C70, C63/C76, C69/C87, and C78/C85. In terms of domain architecture, Agouti spans 56 to 95 (CADMGQDCKDDCDCCLNIATCNCWFGRYFCSCTFGDYQTC).

The protein belongs to the neurotoxin 05 (agouti) family. Post-translationally, contains 6 disulfide bonds. Expressed by the venom gland.

It localises to the secreted. In Lycosa singoriensis (Wolf spider), this protein is U13-lycotoxin-Ls1a.